Consider the following 365-residue polypeptide: Putative glycosyltransferase C06E1.7 (365 aa).

This sequence belongs to the glycosyltransferase 11 family.

The polypeptide is Putative glycosyltransferase C06E1.7 (Caenorhabditis elegans).